The primary structure comprises 988 residues: DNA-binding protein SMUBP-2 (988 aa).

Position 2 is an N-acetylalanine (A2). Residues 213 to 220 (GPPGTGKT), Q402, Y441, and E570 each bind ATP. An SS DNA-binding region spans residues 637 to 783 (TAFEYLDDIV…KARHITVSRR (147 aa)). Disordered regions lie at residues 651–722 (THEG…GGTD), 765–820 (LKHD…PHGS), and 835–872 (RQQG…ALPS). The span at 702–718 (SQVQPQHSSKANGSDRT) shows a compositional bias: polar residues. Residues 721-784 (TDRTEHFRAM…ARHITVSRRS (64 aa)) form the R3H domain. The span at 765-775 (LKHDSTGEGKA) shows a compositional bias: basic and acidic residues. 2 positions are modified to phosphoserine: S797 and S800. The span at 802 to 817 (AQAEPEPQVEQPVGQP) shows a compositional bias: low complexity. Residues 835–844 (RQQGCQAQSQ) are compositionally biased toward polar residues. Positions 857 to 861 (KKKKK) match the Nuclear localization signal motif. The AN1-type zinc finger occupies 884–933 (VKADNTCSFTKCSASTTTLGQFCMHCSRRYCLSHHLPEIHGCGEKARAHA). Zn(2+) contacts are provided by C890, C895, C906, C909, C914, H917, H923, and C925. The disordered stretch occupies residues 943–988 (LYAGSGTKDRALDPAKRAQLQRKLDKKLGELSSQRTSKKKEKERGT). Over residues 949 to 971 (TKDRALDPAKRAQLQRKLDKKLG) the composition is skewed to basic and acidic residues. Residues 957–986 (AKRAQLQRKLDKKLGELSSQRTSKKKEKER) adopt a coiled-coil conformation.

It belongs to the DNA2/NAM7 helicase family. As to quaternary structure, homooligomer. Interacts with RUVBL1. Interacts with RUVBL2. Interacts with GTF3C1. Interacts with ABT1. Interacts with ribosomes. As to expression, expressed in liver, skin, muscle, heart, brain, spleen and kidney.

The protein resides in the nucleus. The protein localises to the cytoplasm. It is found in the cell projection. Its subcellular location is the axon. It catalyses the reaction ATP + H2O = ADP + phosphate + H(+). 5' to 3' helicase that unwinds RNA and DNA duplexes in an ATP-dependent reaction. Specific to 5'-phosphorylated single-stranded guanine-rich sequences. May play a role in RNA metabolism, ribosome biogenesis or initiation of translation. May play a role in regulation of transcription. Interacts with tRNA-Tyr. The sequence is that of DNA-binding protein SMUBP-2 (Ighmbp2) from Rattus norvegicus (Rat).